The sequence spans 1545 residues: MTGIKAQVHPPPDSTLFHEEEKKKVGGNLPQKVINQQERGSDHAPSGHHQYHQLINHDANDTKTSNSVSDVSKGQKTADSNPEGKKQSSKDIFVASSAQKTNQLPGPNPQGSIGAVPLEGLRPKEFRSAPSRKPNKFDTSITKPGVLDDLGKLDEKDIKEKFHLDSDDKLFPWQNVGEFHASGKGSPNTKMSRVIKAYILENFYNDWYCNIATVLGTCFFSWLFAYIGFSWWSMIFIFLGTATVYNAEYTRFNRNIRDDLKRVTVEETLSDRVESTTWLNSFLSKFWVIYMPVLSQQVKDNVNPQLAGVAPGYGIDALAIDEFTLGSKAPTIKGIKSYTKTGKNTVEMDWSFAFTPSDVSDMTATEAREKINPKISLGVTLGKSFVSKTMPILVEDINVAGKMRIKVEFGKAFPNIKIVSLQLLEPPLIDFALKPIGGDTLGLDVMSFLPGLKSFVKNIINSNIGPMLFPPNHLDINVEDIMAAQSKEAIGVLAVTIASADSLKGSDFITNTVDPYIVMTTEDAVPGTDEEVRTSIKSNVKNPRWNETKYLLLNTLEQKLNLKCFDFNDVRKDTVIGDLQLDLADLLQNPVLDNQTAELRSGTKSKGILHYSLHWFPVKEDKSEEKAVERAEAKAKGKKEDENEDTTEKEEDENEESSQTDVGIAKITLQKVKYLDTTSSMTGSLSPCAELFIDGQKVKSYRTLRRINEPSWNETIEVLVPSKSNSKFVLKIFDDRMNGKALICEYSSSLDDIMTTLDTAQEFVKGSPQGDIYLDVSWKSIEMTGAFAAANSVSEPIGCIKLDVKDAIIKGDLSGVGDVDPYYTVSLNRRVLYKSIYHSDTDHPIFDNSTYVPIFSPNQILTLEFHDYQKIGKDRFIGSVQIPTSNVFKKDPKSGKYVGNNGKEEISKLKLKDHEHKVTESIVNVSTTFIPINLVYSPEELVNVEKLEKELKEKKKKFEATQEENEQEMEKNPKEWEVAEIEDPFDSDEKKINRKAKLSLNELIKQKSGILSMQILEGTLSPSSAYLEILADDISYPVFICMKPSQGKLNSEMANIFIRDLNYSKLHFRVSKKHIAKDSDDVISETSYSTLKLLKQAYEEPMWLNFNGSKMKVRFLYTPTSVKLPSSESVEDTGYLNIKLISGHGLKSADRNGYSDPFVHIFVNDKKVFKSNIKKKTLDPVWNEDAKIPILSRSKNQVIFNVLDWDRAGDNDDLGQASLDVSSLEVGKTYNWNLNLNTQGSIKLQGSFNPEYIKPSFDIVKGGITDKPMKIASGAAHATVGIAGTGIGAATGVATGGLKKGGHLLKSLGGNPMKRSKSSNGNESNGAKKSSEKKSFDRRSPSNLNSTSVTPRASLDYDPSVPNTSYAPVQSASPVVKPTDNTSSSSNKKDTPSSNSRGHSRASSFARTLAPHGTYNGFITVVAAENVAKHVQIKISLTQGGRLKHIYKTKSQKANNDGVAVFDEECSFKASPEANLVLGAISHQRLSRDKDLGIAQINLGDPQIQQDGQISVKLGDGHLIVKINYGKDKNGQVPPVPEVPQEYTQ.

Positions 1–89 (MTGIKAQVHP…SNPEGKKQSS (89 aa)) are disordered. The Cytoplasmic segment spans residues 1–206 (MTGIKAQVHP…AYILENFYND (206 aa)). Residues 62–80 (TKTSNSVSDVSKGQKTADS) show a composition bias toward polar residues. Residues Ser-67 and Ser-112 each carry the phosphoserine modification. The chain crosses the membrane as a helical span at residues 207–227 (WYCNIATVLGTCFFSWLFAYI). Residue Gly-228 is a topological domain, extracellular. Residues 229-249 (FSWWSMIFIFLGTATVYNAEY) form a helical membrane-spanning segment. Residues 250–1545 (TRFNRNIRDD…VPEVPQEYTQ (1296 aa)) lie on the Cytoplasmic side of the membrane. Residues 272–479 (RVESTTWLNS…PPNHLDINVE (208 aa)) enclose the SMP-LTD domain. In terms of domain architecture, C2 1 spans 470-596 (PPNHLDINVE…LQNPVLDNQT (127 aa)). The stretch at 620–660 (EDKSEEKAVERAEAKAKGKKEDENEDTTEKEEDENEESSQT) forms a coiled coil. Over residues 624 to 641 (EEKAVERAEAKAKGKKED) the composition is skewed to basic and acidic residues. Residues 624–660 (EEKAVERAEAKAKGKKEDENEDTTEKEEDENEESSQT) are disordered. The span at 642–658 (ENEDTTEKEEDENEESS) shows a compositional bias: acidic residues. 2 consecutive C2 domains span residues 646–763 (TTEK…AQEF) and 783–897 (MTGA…SGKY). A coiled-coil region spans residues 937–972 (SPEELVNVEKLEKELKEKKKKFEATQEENEQEMEKN). Positions 1119–1234 (PTSVKLPSSE…EVGKTYNWNL (116 aa)) constitute a C2 4 domain. Ca(2+) is bound by residues Asp-1150, Asp-1156, Asp-1204, Asp-1206, and Asp-1212. The disordered stretch occupies residues 1304 to 1404 (LLKSLGGNPM…NSRGHSRASS (101 aa)). Positions 1318 to 1328 (SSNGNESNGAK) are enriched in polar residues. The span at 1329-1340 (KSSEKKSFDRRS) shows a compositional bias: basic and acidic residues. Phosphoserine occurs at positions 1340, 1342, and 1346. Residues 1341–1351 (PSNLNSTSVTP) show a composition bias toward polar residues. Residue Thr-1350 is modified to Phosphothreonine. A Phosphoserine modification is found at Ser-1354. Polar residues predominate over residues 1361 to 1373 (VPNTSYAPVQSAS). Low complexity predominate over residues 1377–1404 (KPTDNTSSSSNKKDTPSSNSRGHSRASS). The C2 5 domain occupies 1396-1514 (SRGHSRASSF…QQDGQISVKL (119 aa)). Residue Ser-1400 is modified to Phosphoserine.

The protein belongs to the tricalbin family. Interacts with TCB2 via its C-terminal domain. Requires Ca(2+) as cofactor.

It is found in the cell membrane. The protein resides in the endoplasmic reticulum membrane. In terms of biological role, may play a role in membrane trafficking. This is Tricalbin-3 (TCB3) from Saccharomyces cerevisiae (strain ATCC 204508 / S288c) (Baker's yeast).